A 1215-amino-acid polypeptide reads, in one-letter code: Kinesin-like protein KIN-7I (1215 aa).

One can recognise a Kinesin motor domain in the interval 3–327 (RIHVAVRARP…LQFASRALRV (325 aa)). An ATP-binding site is contributed by 79-86 (GQTNSGKT). Coiled coils occupy residues 333-414 (VNEI…IENL), 571-646 (ESEA…AAYE), 708-855 (IRDY…KRDS), and 894-979 (DMEA…KEDM).

This sequence belongs to the TRAFAC class myosin-kinesin ATPase superfamily. Kinesin family. KIN-7 subfamily.

This chain is Kinesin-like protein KIN-7I, found in Oryza sativa subsp. japonica (Rice).